Consider the following 343-residue polypeptide: Anthranilate phosphoribosyltransferase (343 aa).

5-phospho-alpha-D-ribose 1-diphosphate-binding positions include glycine 86, glycine 89–aspartate 90, threonine 94, asparagine 96–threonine 99, lysine 114–glycine 122, and serine 126. Glycine 86 contacts anthranilate. Serine 98 contacts Mg(2+). Asparagine 117 is a binding site for anthranilate. Residue arginine 172 participates in anthranilate binding. Mg(2+) is bound by residues aspartate 231 and glutamate 232.

This sequence belongs to the anthranilate phosphoribosyltransferase family. Homodimer. Mg(2+) serves as cofactor.

The enzyme catalyses N-(5-phospho-beta-D-ribosyl)anthranilate + diphosphate = 5-phospho-alpha-D-ribose 1-diphosphate + anthranilate. It functions in the pathway amino-acid biosynthesis; L-tryptophan biosynthesis; L-tryptophan from chorismate: step 2/5. Functionally, catalyzes the transfer of the phosphoribosyl group of 5-phosphorylribose-1-pyrophosphate (PRPP) to anthranilate to yield N-(5'-phosphoribosyl)-anthranilate (PRA). This chain is Anthranilate phosphoribosyltransferase, found in Prochlorococcus marinus subsp. pastoris (strain CCMP1986 / NIES-2087 / MED4).